The primary structure comprises 141 residues: ATP synthase epsilon chain (141 aa).

The protein belongs to the ATPase epsilon chain family. As to quaternary structure, F-type ATPases have 2 components, CF(1) - the catalytic core - and CF(0) - the membrane proton channel. CF(1) has five subunits: alpha(3), beta(3), gamma(1), delta(1), epsilon(1). CF(0) has three main subunits: a, b and c.

The protein resides in the cell membrane. Functionally, produces ATP from ADP in the presence of a proton gradient across the membrane. In Natranaerobius thermophilus (strain ATCC BAA-1301 / DSM 18059 / JW/NM-WN-LF), this protein is ATP synthase epsilon chain.